Reading from the N-terminus, the 165-residue chain is MTLKSLFFLLLGLIITVLLDQAIKYWITHTMLLGTEIPLFPFISLYHVRNSGIAFSFFSSFSHWGLIALTITIIVFLFWLWKNTELDKALSRFGIVLIIGGAIGNLIDRIRFQAVTDYILFYIDGVFSFAIFNLADTFITLGAISILIDEFCIWIKTKRHLDKSK.

4 helical membrane-spanning segments follow: residues 7-27, 28-48, 61-81, and 87-107; these read FFLL…KYWI, THTM…LYHV, FSHW…FWLW, and DKAL…GNLI. Catalysis depends on residues Asp117 and Asp136. The chain crosses the membrane as a helical span at residues 128-148; sequence SFAIFNLADTFITLGAISILI.

Belongs to the peptidase A8 family.

The protein resides in the cell inner membrane. It carries out the reaction Release of signal peptides from bacterial membrane prolipoproteins. Hydrolyzes -Xaa-Yaa-Zaa-|-(S,diacylglyceryl)Cys-, in which Xaa is hydrophobic (preferably Leu), and Yaa (Ala or Ser) and Zaa (Gly or Ala) have small, neutral side chains.. It participates in protein modification; lipoprotein biosynthesis (signal peptide cleavage). Functionally, this protein specifically catalyzes the removal of signal peptides from prolipoproteins. The chain is Lipoprotein signal peptidase from Bartonella bacilliformis (strain ATCC 35685 / KC583 / Herrer 020/F12,63).